The chain runs to 344 residues: L-lactate dehydrogenase B (344 aa).

Residues 62–67 (DALPDK) and arginine 109 contribute to the NAD(+) site. Substrate contacts are provided by arginine 116, asparagine 148, and arginine 179. Asparagine 148 lines the NAD(+) pocket. The active-site Proton acceptor is the histidine 203. Threonine 258 serves as a coordination point for substrate.

This sequence belongs to the LDH/MDH superfamily. LDH family. Tetramer that arise from random association of LDH-A and LDH-B.

The catalysed reaction is (S)-lactate + NAD(+) = pyruvate + NADH + H(+). It functions in the pathway fermentation; pyruvate fermentation to lactate; (S)-lactate from pyruvate: step 1/1. The protein is L-lactate dehydrogenase B of Hordeum vulgare (Barley).